The primary structure comprises 3033 residues: Genome polyprotein (3033 aa).

An N-acetylserine; by host modification is found at serine 2. Residues 2-23 are interaction with STAT1; it reads STNPKPQRKTKRNTNRRPEDVK. Residues 2–58 are interaction with EIF2AK2/PKR; it reads STNPKPQRKTKRNTNRRPEDVKFPGGGQIVGGVYLLPRRGPRLGVRTTRKTSERSQP. The interaction with DDX3X stretch occupies residues 2–59; it reads STNPKPQRKTKRNTNRRPEDVKFPGGGQIVGGVYLLPRRGPRLGVRTTRKTSERSQPR. Residues 2–75 are disordered; sequence STNPKPQRKT…PKDRRSTGKA (74 aa). At 2 to 168 the chain is on the cytoplasmic side; that stretch reads STNPKPQRKT…EDGVNYATGN (167 aa). Short sequence motifs (nuclear localization signal) lie at residues 5-13 and 38-43; these read PKPQRKTKR and PRRGPR. Over residues 7-16 the composition is skewed to basic residues; that stretch reads PQRKTKRNTN. Over residues 32–47 the composition is skewed to low complexity; it reads GGVYLLPRRGPRLGVR. Serine 53 carries the phosphoserine; by host modification. 2 short sequence motifs (nuclear localization signal) span residues 58 to 64 and 66 to 71; these read PRGRRQP and PKDRRS. Phosphoserine; by host is present on serine 99. Residues 112 to 152 form an important for endoplasmic reticulum and mitochondrial localization region; that stretch reads PRHRSRNVGKVIDTLTCGFADLMGYIPVVGAPLSGAARAVA. Residue serine 116 is modified to Phosphoserine; by host PKA. Positions 122–173 are interaction with APOA2; it reads VIDTLTCGFADLMGYIPVVGAPLSGAARAVAHGVRVLEDGVNYATGNLPGFP. Residues 164-167 form an important for lipid droplets localization region; sequence YATG. The helical transmembrane segment at 169–189 threads the bilayer; that stretch reads LPGFPFSIFLLALLSCITVPV. Residues 178-191 constitute a propeptide, ER anchor for the core protein, removed in mature form by host signal peptidase; the sequence is LLALLSCITVPVSA. The Lumenal portion of the chain corresponds to 190–358; that stretch reads SAAQVKNTSS…SGAHWGVMFG (169 aa). N-linked (GlcNAc...) asparagine; by host glycans are attached at residues asparagine 196, asparagine 209, and asparagine 234. The segment at 265-296 is important for fusion; it reads VVMSATFCSALYVGDLCGGVMLAAQVFIVSPQ. Residue asparagine 305 is glycosylated (N-linked (GlcNAc...) asparagine; by host). The helical transmembrane segment at 359–379 threads the bilayer; the sequence is LAYFSMQGAWAKVIVILLLAA. Residues 380–729 are Lumenal-facing; that stretch reads GVDAGTTTVG…WEWVVLLFLL (350 aa). An HVR1 region spans residues 385 to 411; sequence TTTVGGAVARSTNVIAGVFSHGPQQNI. 4 N-linked (GlcNAc...) (high mannose) asparagine; by host glycosylation sites follow: asparagine 417, asparagine 423, asparagine 430, and asparagine 448. Cystine bridges form between cysteine 429/cysteine 554, cysteine 452/cysteine 459, cysteine 488/cysteine 496, and cysteine 505/cysteine 510. A glycan (N-linked (GlcNAc...) (high mannose) asparagine; by host) is linked at asparagine 477. Positions 484–496 are CD81-binding 1; the sequence is MRPYCWHYPPKPC. The segment at 524 to 555 is CD81-binding 2; it reads RGVPTYTWGENETDVFLLNSTRPPQGSWFGCT. 3 N-linked (GlcNAc...) (high mannose) asparagine; by host glycosylation sites follow: asparagine 534, asparagine 542, and asparagine 558. Cysteines 566 and 571 form a disulfide. Asparagine 578 carries an N-linked (GlcNAc...) (high mannose) asparagine; by host glycan. 3 cysteine pairs are disulfide-bonded: cysteine 585–cysteine 589, cysteine 601–cysteine 624, and cysteine 611–cysteine 648. N-linked (GlcNAc...) (high mannose) asparagine; by host glycosylation is found at asparagine 627 and asparagine 649. Cysteine 656 and cysteine 681 are disulfide-bonded. The tract at residues 664–675 is EIF2AK2/eIF2-alpha phosphorylation homology domain (PePHD); that stretch reads SQLSPLLHSTTE. A helical transmembrane segment spans residues 730–750; that stretch reads LADARVCACLWMLILLGQAEA. Residues 751–761 lie on the Lumenal side of the membrane; it reads ALEKLVVLHAA. Residues 762 to 782 form a helical membrane-spanning segment; it reads SAANCHGLLYFAIFFVAAWHI. Topologically, residues 783–785 are cytoplasmic; that stretch reads RGR. The helical transmembrane segment at 786–807 threads the bilayer; the sequence is VVPLTTYCLTGLWPFCLLLMAL. The Lumenal portion of the chain corresponds to 808–817; that stretch reads PRQAYAYDAP. A helical membrane pass occupies residues 818-838; the sequence is VHGQIGVGLLILITLFTLTPG. The Cytoplasmic portion of the chain corresponds to 839 to 842; it reads YKTL. A helical membrane pass occupies residues 843-863; it reads LGQCLWWLCYLLTLGEAMIQE. At 864–885 the chain is on the lumenal side; it reads WVPPMQVRGGRDGIAWAVTIFC. The helical transmembrane segment at 886-906 threads the bilayer; the sequence is PGVVFDITKWLLALLGPAYLL. Residues 907–1030 enclose the Peptidase C18 domain; it reads RAALTHVPYF…GYTSKGWKLL (124 aa). The Cytoplasmic segment spans residues 907-1661; that stretch reads RAALTHVPYF…CMQADLEVMT (755 aa). Residues 908–1210 form a protease NS2-3 region; it reads AALTHVPYFV…PVETLDVVTR (303 aa). A lipid anchor (S-palmitoyl cysteine; by host) is attached at cysteine 926. The interval 933–953 is interaction with human SCPS1; sequence AGGRYVQVALLALGRWTGTYI. Active-site for protease NS2 activity; shared with dimeric partner residues include histidine 956, glutamate 976, and cysteine 997. One can recognise a Peptidase S29 domain in the interval 1031–1212; it reads APITAYAQQT…ETLDVVTRSP (182 aa). Residues histidine 1087 and aspartate 1111 each act as charge relay system; for serine protease NS3 activity in the active site. Residues cysteine 1127 and cysteine 1129 each contribute to the Zn(2+) site. The Charge relay system; for serine protease NS3 activity role is filled by serine 1169. Residues cysteine 1175 and histidine 1179 each coordinate Zn(2+). In terms of domain architecture, Helicase ATP-binding spans 1221 to 1373; that stretch reads PAVPQTYQVG…PDIEEVGLGR (153 aa). 1234 to 1241 lines the ATP pocket; sequence APTGSGKS. Residues serine 1241 and glutamate 1321 each coordinate Mg(2+). A DECH box motif is present at residues 1320–1323; the sequence is DECH. Residues 1481-1501 form a disordered region; the sequence is VPQDAVSRSQRRGRTGRGRQG. The interval 1490–1501 is RNA-binding; sequence QRRGRTGRGRQG. The helical transmembrane segment at 1662–1682 threads the bilayer; that stretch reads STWVLAGGVLAAVAAYCLATG. The interval 1683 to 1694 is NS3-binding; it reads CVSIIGRLHVNQ. Over 1683–1809 the chain is Cytoplasmic; sequence CVSIIGRLHV…ALTSPLSTST (127 aa). A helical transmembrane segment spans residues 1810 to 1830; the sequence is TILLNIMGGWLASQIAPPAGA. The Lumenal portion of the chain corresponds to 1831 to 1832; sequence TG. A helical transmembrane segment spans residues 1833-1853; it reads FVVSGLVGAAVGSIGLGKVLV. The interval 1837-1865 is glycine zipper; sequence GLVGAAVGSIGLGKVLVDILAGYGAGISG. Aspartate 1854 is a topological domain (cytoplasmic). Residues 1855–1875 form a helical membrane-spanning segment; the sequence is ILAGYGAGISGALVAFKIMSG. Topologically, residues 1876 to 1885 are lumenal; sequence EKPSMEDVIN. A helical transmembrane segment spans residues 1886 to 1906; it reads LLPGILSPGALVVGVICAAIL. The Cytoplasmic segment spans residues 1907-1976; sequence RRHVGPGEGA…WITEDCPIPC (70 aa). Cysteine 1972 is lipidated: S-palmitoyl cysteine; by host. Cysteine 1976 carries the S-palmitoyl cysteine; by host; partial lipid modification. The stretch at 1977 to 2007 is an intramembrane region; sequence SGSWLRDVWDWVCTILTDFKNWLTSKLFPKL. Residues 1982–2002 are membrane-binding; the sequence is RDVWDWVCTILTDFKNWLTSK. At 2008–3012 the chain is on the cytoplasmic side; the sequence is PGLPFISCQK…FHSVSRARPR (1005 aa). The tract at residues 2009 to 2225 is D1; RNA-binding; it reads GLPFISCQKG…RATCTTHSNT (217 aa). Residues cysteine 2015, cysteine 2033, cysteine 2035, and cysteine 2056 each coordinate Zn(2+). Phosphotyrosine; by host is present on tyrosine 2069. Positions 2124 to 2212 are FKBP8-binding; sequence EFFSWVDGVQ…ASSSVSQLSA (89 aa). A transcriptional activation region spans residues 2124 to 2332; sequence EFFSWVDGVQ…PTPPPRRRRT (209 aa). An interaction with non-structural protein 4A region spans residues 2139–2143; that stretch reads PTPKP. A disordered region spans residues 2192 to 2213; it reads RRLARGSPPSEASSSVSQLSAP. The segment covering 2196–2213 has biased composition (low complexity); that stretch reads RGSPPSEASSSVSQLSAP. At serine 2198 the chain carries Phosphoserine; by host; in p56. Residue serine 2201 is modified to Phosphoserine; by host; in p58. Serine 2205 bears the Phosphoserine; by host; in p56 and p58, regulates intracellular NS5A distribution mark. Phosphoserine; by host; in p58 is present on residues serine 2208, serine 2211, and serine 2214. Residues 2210 to 2249 are ISDR; it reads LSAPSLRATCTTHSNTYDVDMVDANLLMEGGVAQTEPESR. Residues 2214–2275 are interaction with EIF2AK2/PKR; sequence SLRATCTTHS…LEPSIPSECM (62 aa). Residues 2227 to 2315 form a D2 region; it reads DVDMVDANLL…YQPPTVAGCA (89 aa). The segment at 2228–2315 is disordered; sequence VDMVDANLLM…YQPPTVAGCA (88 aa). Residues 2249–2306 are NS4B-binding; the sequence is RVPVLDFLEPMAEEESDLEPSIPSECMLPRSGFPRALPAWARPDYNPPLVESWRRPDY. Residues 2281–2297 form an interaction with human PPIA/CYPA region; sequence FPRALPAWARPDYNPPL. Positions 2316–2326 are enriched in pro residues; the sequence is LPPPKKAPTPP. An SH3-binding motif is present at residues 2322-2325; the sequence is APTP. The residue at position 2324 (threonine 2324) is a Phosphothreonine; by host. A Nuclear localization signal motif is present at residues 2326 to 2334; the sequence is PPRRRRTVG. Residues 2329–2442 are D3; it reads RRRTVGLSES…SEEDDTTVCC (114 aa). Positions 2336–2447 are interaction with host IFI27; it reads SESTISEALQ…TTVCCSMSYS (112 aa). Lysine 2350 participates in a covalent cross-link: Glycyl lysine isopeptide (Lys-Gly) (interchain with G-Cter in ubiquitin). The disordered stretch occupies residues 2352-2432; it reads FGQPPSSGDA…GSGSGSWSTC (81 aa). Positions 2355-2379 are enriched in low complexity; sequence PPSSGDAGSSTGAGAAESGGPTSPG. Residues 2358-2381 form a V3 region; that stretch reads SGDAGSSTGAGAAESGGPTSPGEP. The tract at residues 2371–2439 is interaction with host VAPB; the sequence is ESGGPTSPGE…STCSEEDDTT (69 aa). The span at 2398–2408 shows a compositional bias: acidic residues; sequence EPGDPDLESDQ. The span at 2417 to 2426 shows a compositional bias: gly residues; it reads GGGVAPGSGS. A RdRp catalytic domain is found at 2656 to 2774; it reads PMGFSYDTRC…ISESQGTEED (119 aa). Residues aspartate 2662, aspartate 2760, and aspartate 2761 each coordinate Mg(2+). A helical membrane pass occupies residues 3013–3033; it reads SLLFGLLLLFVGVGLFLLPAR.

The protein belongs to the hepacivirus polyprotein family. As to quaternary structure, homooligomer. Interacts with E1 (via C-terminus). Interacts with the non-structural protein 5A. Interacts (via N-terminus) with host STAT1 (via SH2 domain); this interaction results in decreased STAT1 phosphorylation and ubiquitin-mediated proteasome-dependent STAT1 degradation, leading to decreased IFN-stimulated gene transcription. Interacts with host STAT3; this interaction constitutively activates STAT3. Interacts with host LTBR receptor. Interacts with host TNFRSF1A receptor and possibly induces apoptosis. Interacts with host HNRPK. Interacts with host YWHAE. Interacts with host UBE3A/E6AP. Interacts with host DDX3X. Interacts with host APOA2. Interacts with host RXRA protein. Interacts with host SP110 isoform 3/Sp110b; this interaction sequesters the transcriptional corepressor SP110 away from the nucleus. Interacts with host CREB3 nuclear transcription protein; this interaction triggers cell transformation. Interacts with host ACY3. Interacts with host C1QR1. Interacts with host RBM24; this interaction, which enhances the interaction of the mature core protein with 5'-UTR, may inhibit viral translation and favor replication. Interacts (via N-terminus) with host EIF2AK2/PKR (via N-terminus); this interaction induces the autophosphorylation of EIF2AK2. Part of the viral assembly initiation complex composed of NS2, E1, E2, NS3, NS4A, NS5A and the mature core protein. In terms of assembly, forms a heterodimer with envelope glycoprotein E2. Interacts with mature core protein. Interacts with protease NS2. The heterodimer E1/E2 interacts with host CLDN1; this interaction plays a role in viral entry into host cell. Interacts with host SPSB2 (via C-terminus). Part of the viral assembly initiation complex composed of NS2, E1, E2, NS3, NS4A, NS5A and the mature core protein. Forms a heterodimer with envelope glycoprotein E1. Interacts with host CD81 and SCARB1 receptors; these interactions play a role in viral entry into host cell. Interacts with host EIF2AK2/PKR; this interaction inhibits EIF2AK2 and probably allows the virus to evade the innate immune response. Interacts with host CD209/DC-SIGN and CLEC4M/DC-SIGNR. Interact with host SPCS1; this interaction is essential for viral particle assembly. Interacts with protease NS2. The heterodimer E1/E2 interacts with host CLDN1; this interaction plays a role in viral entry into host cell. Part of the viral assembly initiation complex composed of NS2, E1, E2, NS3, NS4A, NS5A and the mature core protein. Interacts with host SLC3A2/4F2hc; the interaction may facilitate viral entry into host cell. As to quaternary structure, homohexamer. Homoheptamer. Interacts with protease NS2. In terms of assembly, homodimer. Interacts with host SPCS1; this interaction is essential for viral particle assembly. Interacts with envelope glycoprotein E1. Interacts with envelope glycoprotein E2. Interacts with viroporin p7. Interacts with serine protease/helicase NS3. Part of the replication complex composed of NS2, NS3, NS4A, NS4B, NS5A and the RNA-directed RNA polymerase embedded in an ER-derived membranous web. Part of the viral assembly initiation complex composed of NS2, E1, E2, NS3, NS4A, NS5A and the mature core protein. Interacts with host NEURL3; this interaction prevents E1 binding to glycoprotein E2. Interacts with protease NS2. Interacts with non-structural protein 4A; this interaction stabilizes the folding of NS3 serine protease. NS3-NS4A interaction is essential for NS3 activation and allows membrane anchorage of the latter. NS3/NS4A complex also prevents phosphorylation of host IRF3, thus preventing the establishment of dsRNA induced antiviral state. Interacts with host MAVS; this interaction leads to the cleavage and inhibition of host MAVS. Interacts with host TICAM1; this interaction leads to the cleavage and inhibition of host TICAM1. Interacts with host TANK-binding kinase/TBK1; this interaction results in the inhibition of the association between TBK1 and IRF3, which leads to the inhibition of IRF3 activation. Interacts with host RBM24. Part of the replication complex composed of NS2, NS3, NS4A, NS4B, NS5A and the RNA-directed RNA polymerase embedded in an ER-derived membranous web. Part of the viral assembly initiation complex composed of NS2, E1, E2, NS3, NS4A, NS5A and the mature core protein. As to quaternary structure, interacts with NS3 serine protease; this interaction stabilizes the folding of NS3 serine protease. NS3-NS4A interaction is essential for NS3 activation and allows membrane anchorage of the latter. Interacts with non-structural protein 5A (via N-terminus). Part of the replication complex composed of NS2, NS3, NS4A, NS4B, NS5A and the RNA-directed RNA polymerase embedded in an ER-derived membranous web. Part of the viral assembly initiation complex composed of NS2, E1, E2, NS3, NS4A, NS5A and the mature core protein. In terms of assembly, homomultimer. Interacts with non-structural protein NS5A. Interacts with host PLA2G4C; this interaction likely initiates the recruitment of replication complexes to lipid droplets. Interacts with host STING; this interaction disrupts the interaction between STING and TBK1 thereby suppressing the interferon signaling. Part of the replication complex composed of NS2, NS3, NS4A, NS4B, NS5A and the RNA-directed RNA polymerase embedded in an ER-derived membranous web. Monomer. Homodimer; dimerization is required for RNA-binding. Interacts with the mature core protein. Interacts (via N-terminus) with non-structural protein 4A. Interacts with non-structural protein 4B. Interacts (via region D2) with RNA-directed RNA polymerase. Part of the viral assembly initiation complex composed of NS2, E1, E2, NS3, NS4A, NS5A and the mature core protein. Part of the replication complex composed of NS2, NS3, NS4A, NS4B, NS5A and the RNA-directed RNA polymerase embedded in an ER-derived membranous web. Interacts with host GRB2. Interacts with host BIN1. Interacts with host PIK3R1. Interacts with host SRCAP. Interacts with host FKBP8. Interacts (via C-terminus) with host VAPB (via MSP domain). Interacts with host EIF2AK2/PKR; this interaction leads to disruption of EIF2AK2 dimerization by NS5A and probably allows the virus to evade the innate immune response. Interacts (via N-terminus) with host PACSIN2 (via N-terminus); this interaction attenuates protein kinase C alpha-mediated phosphorylation of PACSIN2 by disrupting the interaction between PACSIN2 and PRKCA. Interacts (via N-terminus) with host SRC kinase (via SH2 domain). Interacts with most Src-family kinases. Interacts with host IFI27 and SKP2; promotes the ubiquitin-mediated proteasomal degradation of NS5A. Interacts with host GPS2. Interacts with host TNFRSF21; this interaction allows the modulation by the virus of JNK, p38 MAPK, STAT3, and Akt signaling pathways in a DR6-dependent manner. Interacts (via N-terminus) with host CIDEB (via N-terminus); this interaction seems to regulate the association of HCV particles with APOE. Interacts with host CHKA/Choline Kinase-alpha; CHKA bridges host PI4KA and NS5A and potentiates NS5A-stimulated PI4KA activity, which then facilitates the targeting of the ternary complex to the ER for viral replication. Interacts with host SPSB2 (via C-terminus); this interaction targets NS5A for ubiquitination and degradation. Interacts with host RAB18; this interaction may promote the association of NS5A and other replicase components with lipid droplets. Interacts (via region D2) with host PPIA/CYPA; the interaction stimulates RNA-binding ability of NS5A and is dependent on the peptidyl-prolyl cis-trans isomerase activity of PPIA/CYPA. Interacts with host TRIM14; this interaction induces the degradation of NS5A. As to quaternary structure, homooligomer. Interacts with non-structural protein 5A. Interacts with host VAPB. Interacts with host PRK2/PKN2. Interacts with host HNRNPA1 and SEPT6; these interactions facilitate the viral replication. Part of the replication complex composed of NS2, NS3, NS4A, NS4B, NS5A and the RNA-directed RNA polymerase embedded in an ER-derived membranous web. The cofactor is Zn(2+). Mg(2+) serves as cofactor. Specific enzymatic cleavages in vivo yield mature proteins. The structural proteins, core, E1, E2 and p7 are produced by proteolytic processing by host signal peptidases. The core protein is synthesized as a 23 kDa precursor which is retained in the ER membrane through the hydrophobic signal peptide. Cleavage by the signal peptidase releases the 21 kDa mature core protein. The cleavage of the core protein precursor occurs between aminoacids 176 and 188 but the exact cleavage site is not known. Some degraded forms of the core protein appear as well during the course of infection. The other proteins (p7, NS2, NS3, NS4A, NS4B, NS5A and NS5B) are cleaved by the viral proteases. Autoprocessing between NS2 and NS3 is mediated by the NS2 cysteine protease catalytic domain and regulated by the NS3 N-terminal domain. In terms of processing, phosphorylated by host PKC and PKA. Post-translationally, ubiquitinated; mediated by UBE3A and leading to core protein subsequent proteasomal degradation. Highly N-glycosylated. In terms of processing, palmitoylation is required for NS2/3 autoprocessing and E2 recruitment to membranes. Post-translationally, palmitoylated. This modification may play a role in its polymerization or in protein-protein interactions. Cleaved by host caspases which arec probably activated by the viral infection. In terms of processing, ubiquitinated. Ubiquitination, most probably at Lys-2350, mediated by host IFI27 and SKP2 leads to proteasomal degradation, restricting viral infection. Post-translationally, phosphorylated on serines in a basal form termed p56. p58 is a hyperphosphorylated form of p56. p56 and p58 coexist in the cell in roughly equivalent amounts. Hyperphosphorylation is dependent on the presence of NS4A. Host CSNK1A1/CKI-alpha, PI4KA or RPS6KB1 kinases may be responsible for NS5A phosphorylation. Phosphorylated NS5A is involved in viral replication. Tyrosine phosphorylation is essential for the interaction with host SRC. In terms of processing, the N-terminus is phosphorylated by host PRK2/PKN2.

It is found in the host endoplasmic reticulum membrane. The protein localises to the host mitochondrion membrane. Its subcellular location is the virion. It localises to the host cytoplasm. The protein resides in the host nucleus. It is found in the host lipid droplet. The protein localises to the virion membrane. Its subcellular location is the host mitochondrion. It localises to the host cell membrane. The protein resides in the host perinuclear region. The enzyme catalyses Hydrolysis of four peptide bonds in the viral precursor polyprotein, commonly with Asp or Glu in the P6 position, Cys or Thr in P1 and Ser or Ala in P1'.. It catalyses the reaction a ribonucleoside 5'-triphosphate + H2O = a ribonucleoside 5'-diphosphate + phosphate + H(+). It carries out the reaction ATP + H2O = ADP + phosphate + H(+). The catalysed reaction is RNA(n) + a ribonucleoside 5'-triphosphate = RNA(n+1) + diphosphate. With respect to regulation, inhibited by the antiviral drug hexamethylene amiloride. Inhibition by amantadine appears to be genotype-dependent. Also inhibited by long-alkyl-chain iminosugar derivatives. Its activity is regulated as follows. Activity is up-regulated by PRK2/PKN2-mediated phosphorylation. Packages viral RNA to form a viral nucleocapsid, and promotes virion budding. Participates in the viral particle production as a result of its interaction with the non-structural protein 5A. Binds RNA and may function as a RNA chaperone to induce the RNA structural rearrangements taking place during virus replication. Modulates viral translation initiation by interacting with viral IRES and 40S ribosomal subunit. Affects various cell signaling pathways, host immunity and lipid metabolism. Prevents the establishment of cellular antiviral state by blocking the interferon-alpha/beta (IFN-alpha/beta) and IFN-gamma signaling pathways and by blocking the formation of phosphorylated STAT1 and promoting ubiquitin-mediated proteasome-dependent degradation of STAT1. Activates STAT3 leading to cellular transformation. Regulates the activity of cellular genes, including c-myc and c-fos. May repress the promoter of p53, and sequester CREB3 and SP110 isoform 3/Sp110b in the cytoplasm. Represses cell cycle negative regulating factor CDKN1A, thereby interrupting an important check point of normal cell cycle regulation. Targets transcription factors involved in the regulation of inflammatory responses and in the immune response: suppresses NF-kappa-B activation, and activates AP-1. Binds to dendritic cells (DCs) via C1QR1, resulting in down-regulation of T-lymphocytes proliferation. Alters lipid metabolism by interacting with hepatocellular proteins involved in lipid accumulation and storage. Induces up-regulation of FAS promoter activity, and thereby contributes to the increased triglyceride accumulation in hepatocytes (steatosis). In terms of biological role, forms a heterodimer with envelope glycoprotein E2, which mediates virus attachment to the host cell, virion internalization through clathrin-dependent endocytosis and fusion with host membrane. Fusion with the host cell is most likely mediated by both E1 and E2, through conformational rearrangements of the heterodimer required for fusion rather than a classical class II fusion mechanism. E1/E2 heterodimer binds host apolipoproteins such as APOB and APOE thereby forming a lipo-viro-particle (LVP). APOE associated to the LVP allows the initial virus attachment to cell surface receptors such as the heparan sulfate proteoglycans (HSPGs), syndecan-1 (SDC1), syndecan-1 (SDC2), the low-density lipoprotein receptor (LDLR) and scavenger receptor class B type I (SCARB1). The cholesterol transfer activity of SCARB1 allows E2 exposure and binding of E2 to SCARB1 and the tetraspanin CD81. E1/E2 heterodimer binding on CD81 activates the epithelial growth factor receptor (EGFR) signaling pathway. Diffusion of the complex E1-E2-EGFR-SCARB1-CD81 to the cell lateral membrane allows further interaction with Claudin 1 (CLDN1) and occludin (OCLN) to finally trigger HCV entry. Its function is as follows. Forms a heterodimer with envelope glycoprotein E1, which mediates virus attachment to the host cell, virion internalization through clathrin-dependent endocytosis and fusion with host membrane. Fusion with the host cell is most likely mediated by both E1 and E2, through conformational rearrangements of the heterodimer required for fusion rather than a classical class II fusion mechanism. The interaction between envelope glycoprotein E2 and host apolipoprotein E/APOE allows the proper assembly, maturation and infectivity of the viral particles. This interaction is probably promoted via the up-regulation of cellular autophagy by the virus. E1/E2 heterodimer binds host apolipoproteins such as APOB and APOE thereby forming a lipo-viro-particle (LVP). APOE associated to the LVP allows the initial virus attachment to cell surface receptors such as the heparan sulfate proteoglycans (HSPGs), syndecan-1 (SDC1), syndecan-1 (SDC2), the low-density lipoprotein receptor (LDLR) and scavenger receptor class B type I (SCARB1). The cholesterol transfer activity of SCARB1 allows E2 exposure and binding of E2 to SCARB1 and the tetraspanin CD81. E1/E2 heterodimer binding on CD81 activates the epithelial growth factor receptor (EGFR) signaling pathway. Diffusion of the complex E1-E2-EGFR-SCARB1-CD81 to the cell lateral membrane allows further interaction with Claudin 1 (CLDN1) and occludin (OCLN) to finally trigger HCV entry. Inhibits host EIF2AK2/PKR activation, preventing the establishment of an antiviral state. Viral ligand for CD209/DC-SIGN and CLEC4M/DC-SIGNR, which are respectively found on dendritic cells (DCs), and on liver sinusoidal endothelial cells and macrophage-like cells of lymph node sinuses. These interactions allow the capture of circulating HCV particles by these cells and subsequent facilitated transmission to permissive cells such as hepatocytes and lymphocyte subpopulations. The interaction between E2 and host amino acid transporter complex formed by SLC3A2 and SLC7A5/LAT1 may facilitate viral entry into host cell. Functionally, ion channel protein that acts as a viroporin and plays an essential role in the assembly, envelopment and secretion of viral particles. Regulates the host cell secretory pathway, which induces the intracellular retention of viral glycoproteins and favors assembly of viral particles. Creates a pore in acidic organelles and releases Ca(2+) and H(+) in the cytoplasm of infected cells, leading to a productive viral infection. High levels of cytoplasmic Ca(2+) may trigger membrane trafficking and transport of viral ER-associated proteins to viroplasms, sites of viral genome replication. This ionic imbalance induces the assembly of the inflammasome complex, which triggers the maturation of pro-IL-1beta into IL-1beta through the action of caspase-1. Targets also host mitochondria and induces mitochondrial depolarization. In addition of its role as a viroporin, acts as a lipid raft adhesion factor. Cysteine protease required for the proteolytic auto-cleavage between the non-structural proteins NS2 and NS3. The N-terminus of NS3 is required for the function of NS2 protease (active region NS2-3). Promotes the initiation of viral particle assembly by mediating the interaction between structural and non-structural proteins. In terms of biological role, displays three enzymatic activities: serine protease with a chymotrypsin-like fold, NTPase and RNA helicase. NS3 serine protease, in association with NS4A, is responsible for the cleavages of NS3-NS4A, NS4A-NS4B, NS4B-NS5A and NS5A-NS5B. The NS3/NS4A complex prevents phosphorylation of host IRF3, thus preventing the establishment of dsRNA induced antiviral state. The NS3/NS4A complex induces host amino acid transporter component SLC3A2, thus contributing to HCV propagation. NS3 RNA helicase binds to RNA and unwinds both dsDNA and dsRNA in the 3' to 5' direction, and likely resolves RNA complicated stable secondary structures in the template strand. Binds a single ATP and catalyzes the unzipping of a single base pair of dsRNA. Inhibits host antiviral proteins TBK1 and IRF3 thereby preventing the establishment of an antiviral state. Cleaves host MAVS/CARDIF thereby preventing the establishment of an antiviral state. Cleaves host TICAM1/TRIF, thereby disrupting TLR3 signaling and preventing the establishment of an antiviral state. Its function is as follows. Peptide cofactor which forms a non-covalent complex with the N-terminal of NS3 serine protease. The NS3/NS4A complex prevents phosphorylation of host IRF3, thus preventing the establishment of dsRNA induced antiviral state. The NS3/NS4A complex induces host amino acid transporter component SLC3A2, thus contributing to HCV propagation. Functionally, induces a specific membrane alteration that serves as a scaffold for the virus replication complex. This membrane alteration gives rise to the so-called ER-derived membranous web that contains the replication complex. NS4B self-interaction contributes to its function in membranous web formation. Promotes host TRIF protein degradation in a CASP8-dependent manner thereby inhibiting host TLR3-mediated interferon signaling. Disrupts the interaction between STING and TBK1 contributing to the inhibition of interferon signaling. Phosphorylated protein that is indispensable for viral replication and assembly. Both hypo- and hyperphosphorylated states are required for the viral life cycle. The hyperphosphorylated form of NS5A is an inhibitor of viral replication. Involved in RNA-binding and especially in binding to the viral genome. Zinc is essential for RNA-binding. Participates in the viral particle production as a result of its interaction with the viral mature core protein. Its interaction with host VAPB may target the viral replication complex to vesicles. Down-regulates viral IRES translation initiation. Mediates interferon resistance, presumably by interacting with and inhibiting host EIF2AK2/PKR. Prevents BIN1-induced apoptosis. Acts as a transcriptional activator of some host genes important for viral replication when localized in the nucleus. Via the interaction with host PACSIN2, modulates lipid droplet formation in order to promote virion assembly. Modulates TNFRSF21/DR6 signaling pathway for viral propagation. In terms of biological role, RNA-dependent RNA polymerase that performs primer-template recognition and RNA synthesis during viral replication. Initiates RNA transcription/replication at a flavin adenine dinucleotide (FAD), resulting in a 5'- FAD cap on viral RNAs. In this way, recognition of viral 5' RNA by host pattern recognition receptors can be bypassed, thereby evading activation of antiviral pathways. The chain is Genome polyprotein from Homo sapiens (Human).